Reading from the N-terminus, the 424-residue chain is Tyrosine--tRNA ligase (424 aa).

Residue Y37 participates in L-tyrosine binding. The short motif at 42 to 51 (PTADSLHLGH) is the 'HIGH' region element. L-tyrosine-binding residues include Y175 and Q179. Residues 235–239 (KFGKT) carry the 'KMSKS' region motif. ATP is bound at residue K238. Residues 357-414 (ADLQQALVAAELVPSRGQARTLISSNAVSVNGEKQASIDYVFDDADRLYSRYTLLRRG) form the S4 RNA-binding domain.

The protein belongs to the class-I aminoacyl-tRNA synthetase family. TyrS type 1 subfamily. In terms of assembly, homodimer.

The protein resides in the cytoplasm. It carries out the reaction tRNA(Tyr) + L-tyrosine + ATP = L-tyrosyl-tRNA(Tyr) + AMP + diphosphate + H(+). Its function is as follows. Catalyzes the attachment of tyrosine to tRNA(Tyr) in a two-step reaction: tyrosine is first activated by ATP to form Tyr-AMP and then transferred to the acceptor end of tRNA(Tyr). This chain is Tyrosine--tRNA ligase, found in Sodalis glossinidius (strain morsitans).